Consider the following 805-residue polypeptide: Sucrose synthase (805 aa).

Residues 275 to 752 (MVFNVVILSP…GLQRIEEKYT (478 aa)) form a GT-B glycosyltransferase region.

This sequence belongs to the glycosyltransferase 1 family. Plant sucrose synthase subfamily.

The catalysed reaction is an NDP-alpha-D-glucose + D-fructose = a ribonucleoside 5'-diphosphate + sucrose + H(+). In terms of biological role, sucrose-cleaving enzyme that provides UDP-glucose and fructose for various metabolic pathways. The polypeptide is Sucrose synthase (SS1) (Vigna radiata var. radiata (Mung bean)).